A 303-amino-acid polypeptide reads, in one-letter code: MLSVIKQRDKEVLAHLPNKRKIAGNKAHLETYKKLAKYTVSASIFKFLSISHPCPLRAKTRLFFEVSLGNRIADCVMLTSCGETRICYVIELKTCMTSNLDLISDIRKSQRSQGLCQLADTVNFIHNYAPLGRQAWTVLPILIFKSQKTLKTLHIETPKFPVNLTHTSEEKLSCFLWSRADVEIRKKIHLAPKPKRIFKWDSLLDSTSTEHSAYRQKLIERNKKKCFTLQNQTSKFRDRTNKKSNDQLRARQANARPCKKKQHNNKRLRNNRKHGGKVSRLTTTTSFSSEAAFSNYPVSTHKL.

A compositionally biased stretch (basic and acidic residues) spans 235–249; the sequence is KFRDRTNKKSNDQLR. The interval 235-280 is disordered; that stretch reads KFRDRTNKKSNDQLRARQANARPCKKKQHNNKRLRNNRKHGGKVSR. Positions 257–277 are enriched in basic residues; that stretch reads PCKKKQHNNKRLRNNRKHGGK.

It belongs to the herpesviridae UL24 family.

It localises to the virion. The protein localises to the host cytoplasm. Its subcellular location is the host nucleus. It is found in the host nucleolus. The protein resides in the host Golgi apparatus. May participate in nuclear egress of viral particles. Plays a role in the dispersal of several host nucleolar proteins including NCL/nucleolin and NPM1. Since deletion of host NCL/nucleolin negatively impact on nuclear egress, UL24 supposedly acts on this process through its effect on host nucleoli. The chain is Protein UL24 homolog (20) from Saimiri sciureus (Common squirrel monkey).